The chain runs to 664 residues: DNA topoisomerase 4 subunit B (664 aa).

ATP is bound by residues tyrosine 7, asparagine 47, aspartate 74, 114-120 (GLHGVGA), and lysine 341. Residues 386-418 (REAARKAREDARSGKKNKRKDTLLSGKLTPAQS) form a disordered region. Over residues 387-398 (EAARKAREDARS) the composition is skewed to basic and acidic residues. In terms of domain architecture, Toprim spans 424-538 (NELYLVEGDS…AGRVFIALPP (115 aa)). 3 residues coordinate Mg(2+): glutamate 430, aspartate 503, and aspartate 505.

Belongs to the type II topoisomerase family. ParE type 2 subfamily. In terms of assembly, heterotetramer composed of ParC and ParE. It depends on Mg(2+) as a cofactor. Requires Mn(2+) as cofactor. The cofactor is Ca(2+).

It carries out the reaction ATP-dependent breakage, passage and rejoining of double-stranded DNA.. Its function is as follows. Topoisomerase IV is essential for chromosome segregation. It relaxes supercoiled DNA. Performs the decatenation events required during the replication of a circular DNA molecule. In Staphylococcus epidermidis (strain ATCC 35984 / DSM 28319 / BCRC 17069 / CCUG 31568 / BM 3577 / RP62A), this protein is DNA topoisomerase 4 subunit B.